The chain runs to 298 residues: Protein FAM221A (298 aa).

A compositionally biased stretch (polar residues) spans 241–257 (SSPETLTDVGTSSQVSS). Positions 241-263 (SSPETLTDVGTSSQVSSLRRPEE) are disordered.

It belongs to the FAM221 family.

The polypeptide is Protein FAM221A (FAM221A) (Homo sapiens (Human)).